The sequence spans 379 residues: MEYGEEPSIKRFLMLPDDLVFNCLARVSRLHYPTLSLVSKKFRFLLASKELYQTRILLGGTESCLYVCVRLHTDSEQLHWFIIYQGPNSSKKVLVPISSPNFTSAALPGFVVVGHEIYAIGGGSENKNASINATGSKTYNALSSVMVMDSRSHTWREAPSMRVARVFPSACTLDGRIYVTGGCENLNSMNWMEIFDTKTQTWEFLQIPSEEVCKGSEYLSISYQRTVYVGSREKDVTYKMHKGKWRGADICLNHGWSLDPSSCCVIENVFYRCSLGDVRWYDLKKREWAALKGLEGLPTFTNYYRNFKSADHCGKLAISWEEYVLVDDETKIWCAEIAIQKRQNGEIWGTLEWFDNVFISSGPNRHVDLLVNALTATVW.

The F-box domain occupies 9-55; that stretch reads IKRFLMLPDDLVFNCLARVSRLHYPTLSLVSKKFRFLLASKELYQTR. 3 Kelch repeats span residues 116–175, 176–222, and 262–308; these read EIYA…TLDG, RIYV…LSIS, and SCCV…RNFK.

The protein is F-box/kelch-repeat protein At4g33900 of Arabidopsis thaliana (Mouse-ear cress).